Consider the following 1339-residue polypeptide: Receptor tyrosine-protein kinase erbB-3 (1339 aa).

Residues 1-19 (MSAIGTLQVLGFLLSLARG) form the signal peptide. Residues 20-641 (SEMGNSQAVC…QAEVLMSKPH (622 aa)) are Extracellular-facing. Residue Asn-126 is glycosylated (N-linked (GlcNAc...) asparagine). Intrachain disulfides connect Cys-186–Cys-194, Cys-190–Cys-202, Cys-210–Cys-218, Cys-214–Cys-226, Cys-227–Cys-235, Cys-231–Cys-243, Cys-246–Cys-255, Cys-259–Cys-286, Cys-290–Cys-301, Cys-305–Cys-320, and Cys-323–Cys-327. Asn-250 carries an N-linked (GlcNAc...) asparagine glycan. Asn-353, Asn-408, Asn-414, Asn-437, and Asn-469 each carry an N-linked (GlcNAc...) asparagine glycan. 10 disulfide bridges follow: Cys-500–Cys-509, Cys-504–Cys-517, Cys-520–Cys-529, Cys-533–Cys-549, Cys-552–Cys-565, Cys-556–Cys-573, Cys-576–Cys-585, Cys-589–Cys-610, Cys-613–Cys-621, and Cys-617–Cys-629. The N-linked (GlcNAc...) asparagine glycan is linked to Asn-522. Asn-566 is a glycosylation site (N-linked (GlcNAc...) asparagine). N-linked (GlcNAc...) asparagine glycosylation occurs at Asn-616. Residues 642–662 (LVIAVTVGLTVIFLILGGSFL) traverse the membrane as a helical segment. Residues 663–1339 (YWRGRRIQNK…LFPKANAQRI (677 aa)) lie on the Cytoplasmic side of the membrane. Ser-684 is modified (phosphoserine). The 258-residue stretch at 707 to 964 (LRKLKVLGSG…TFKELANEFT (258 aa)) folds into the Protein kinase domain. Residues 713–721 (LGSGVFGTV), Lys-740, 786–788 (QYL), and 832–837 (DLALRN) contribute to the ATP site. The Proton acceptor role is filled by Asp-832. A Phosphoserine modification is found at Ser-980. 3 disordered regions span residues 1028-1052 (LSLP…SGYM), 1077-1156 (RPIS…GNGY), and 1181-1212 (SVLG…PRPG). Residues 1185–1195 (TEEEDEDEEYE) are compositionally biased toward acidic residues.

This sequence belongs to the protein kinase superfamily. Tyr protein kinase family. EGF receptor subfamily. As to quaternary structure, monomer and homodimer. Heterodimer with each of the other ERBB receptors (Potential). Interacts with CSPG5, PA2G4, GRB7 and MUC1. Interacts with MYOC. Found in a ternary complex with NRG1 and ITGAV:ITGB3 or ITGA6:ITGB4. In terms of processing, autophosphorylated. Ligand-binding increases phosphorylation on tyrosine residues and promotes its association with the p85 subunit of phosphatidylinositol 3-kinase. In the muscle, expression localizes to the synaptic sites of muscle fibers.

Its subcellular location is the membrane. It catalyses the reaction L-tyrosyl-[protein] + ATP = O-phospho-L-tyrosyl-[protein] + ADP + H(+). Functionally, tyrosine-protein kinase that plays an essential role as cell surface receptor for neuregulins. Binds to neuregulin-1 (NRG1) and is activated by it; ligand-binding increases phosphorylation on tyrosine residues and promotes its association with the p85 subunit of phosphatidylinositol 3-kinase. May also be activated by CSPG5. Involved in the regulation of myeloid cell differentiation. The chain is Receptor tyrosine-protein kinase erbB-3 (Erbb3) from Mus musculus (Mouse).